The sequence spans 160 residues: Epithelial membrane protein 1 (160 aa).

A helical membrane pass occupies residues 1 to 21 (MLVLLAGLFVVHIATAIMLFV). N-linked (GlcNAc...) asparagine glycosylation is found at Asn-35 and Asn-43. 2 helical membrane passes run 67–87 (FMILSIIFSIISLVVFVFQLF) and 95–115 (FFLSGSTMLVCWLCILVGVSI). Asn-128 is a glycosylation site (N-linked (GlcNAc...) asparagine). The chain crosses the membrane as a helical span at residues 137 to 157 (FILTWICFCFSFIIGILYMVL).

It belongs to the PMP-22/EMP/MP20 family.

It localises to the membrane. This Mus musculus (Mouse) protein is Epithelial membrane protein 1 (Emp1).